The following is a 499-amino-acid chain: L-arabinose isomerase (499 aa).

Mn(2+)-binding residues include glutamate 306, glutamate 333, histidine 350, and histidine 449.

The protein belongs to the arabinose isomerase family. Requires Mn(2+) as cofactor.

It catalyses the reaction beta-L-arabinopyranose = L-ribulose. Its pathway is carbohydrate degradation; L-arabinose degradation via L-ribulose; D-xylulose 5-phosphate from L-arabinose (bacterial route): step 1/3. In terms of biological role, catalyzes the conversion of L-arabinose to L-ribulose. The polypeptide is L-arabinose isomerase (Aeromonas salmonicida (strain A449)).